The sequence spans 73 residues: Translation initiation factor IF-1 (73 aa).

Residues 1–73 (MAKKDGAIEV…SRGRIVYRYK (73 aa)) enclose the S1-like domain.

The protein belongs to the IF-1 family. In terms of assembly, component of the 30S ribosomal translation pre-initiation complex which assembles on the 30S ribosome in the order IF-2 and IF-3, IF-1 and N-formylmethionyl-tRNA(fMet); mRNA recruitment can occur at any time during PIC assembly.

The protein resides in the cytoplasm. One of the essential components for the initiation of protein synthesis. Stabilizes the binding of IF-2 and IF-3 on the 30S subunit to which N-formylmethionyl-tRNA(fMet) subsequently binds. Helps modulate mRNA selection, yielding the 30S pre-initiation complex (PIC). Upon addition of the 50S ribosomal subunit IF-1, IF-2 and IF-3 are released leaving the mature 70S translation initiation complex. This chain is Translation initiation factor IF-1, found in Mycolicibacterium smegmatis (strain ATCC 700084 / mc(2)155) (Mycobacterium smegmatis).